Here is a 68-residue protein sequence, read N- to C-terminus: DNA-directed RNA polymerase subunit omega (68 aa).

The protein belongs to the RNA polymerase subunit omega family. The RNAP catalytic core consists of 2 alpha, 1 beta, 1 beta' and 1 omega subunit. When a sigma factor is associated with the core the holoenzyme is formed, which can initiate transcription.

It carries out the reaction RNA(n) + a ribonucleoside 5'-triphosphate = RNA(n+1) + diphosphate. In terms of biological role, promotes RNA polymerase assembly. Latches the N- and C-terminal regions of the beta' subunit thereby facilitating its interaction with the beta and alpha subunits. The protein is DNA-directed RNA polymerase subunit omega of Persephonella marina (strain DSM 14350 / EX-H1).